Reading from the N-terminus, the 205-residue chain is ATP synthase subunit b (205 aa).

The signal sequence occupies residues 1–27 (MKLNKKHLVAILSVLSLSIIVVPLLTS). Residue Cys28 is the site of N-palmitoyl cysteine attachment. Cys28 carries the S-diacylglycerol cysteine lipid modification. A helical membrane pass occupies residues 48 to 68 (VWVFIAQVIAMCVVFSLVLWL).

Belongs to the ATPase B chain family. F-type ATPases have 2 components, F(1) - the catalytic core - and F(0) - the membrane proton channel. F(1) has five subunits: alpha(3), beta(3), gamma(1), delta(1), epsilon(1). F(0) has three main subunits: a(1), b(2) and c(10-14). The alpha and beta chains form an alternating ring which encloses part of the gamma chain. F(1) is attached to F(0) by a central stalk formed by the gamma and epsilon chains, while a peripheral stalk is formed by the delta and b chains.

It localises to the cell membrane. Its function is as follows. F(1)F(0) ATP synthase produces ATP from ADP in the presence of a proton or sodium gradient. F-type ATPases consist of two structural domains, F(1) containing the extramembraneous catalytic core and F(0) containing the membrane proton channel, linked together by a central stalk and a peripheral stalk. During catalysis, ATP synthesis in the catalytic domain of F(1) is coupled via a rotary mechanism of the central stalk subunits to proton translocation. Component of the F(0) channel, it forms part of the peripheral stalk, linking F(1) to F(0). In Ureaplasma parvum serovar 3 (strain ATCC 27815 / 27 / NCTC 11736), this protein is ATP synthase subunit b.